The primary structure comprises 1238 residues: MANISSPFGQNEWLVEEMYRKFRDDPSSVDPSWHEFLVDYNPESTQEATEPAVVKPAAAPAKPAPAPAPAKPAAGPPAAGNGSPAAAPSAKPAAAPAKAPAPPPAEGDEMQVLRGAAAAVVKNMSASLDVPTATSVRAVPAKLLIDNRIVINNQLKRNRGGKISFTHLLGYALVQAVKKFPNMNRHYLDVDGKPNAVTPAHTNLGLAIDLQGKDGKRALVVAGIKRCETMRFAQFVTAYEDIVRRARDGKLTAEDFSGVTISLTNPGTIGTVHSVPRLMAGQGAIIGVGAMEYPAEFQGASEERIAELGIGKLITLTSTYDHRIIQGAESGDFLRTIHQMLLADEFWDEIFRELSIPYLPVRWRPDNPDSIVDKNARIIELIAAYRNRGHLMADIDPLRLDKTRFRSHPDLDVCTHGLTLWDLDRSFKVGGCFAGPQNMKLRDVLSILRDTYCRHVGVEYTHILEPEQQQWLQQRVEAKHVKPTVAQQKYVLSKLNAAEAFETFLQTKYVGQKRFSLEGAESVIPMMDAAIDQCAEYGLDEVVIGMPHRGRLNVLANIVGKPYSQIFSEFEGNLNPSQAHGSGDVKYHLGATGVYLQMFGDNDIQVSLTANPSHLEAVDPVLEGLVRAKQDLLEHGETDTENQRAFSVVPMMLHGDAAFAGQGVVAETLNLANLPGYRVGGTIHIIVNNQIGFTTAPEYSRSTEYCTDVAKTIGAPIFHVNGDDPEACVWVARLAVDFRQRFNKDVIIDMLCYRRRGHNEGDDPSMTNPRMYDVVDTKRGVRKSYTEALIGRGDISIKEAEDALRDYQGQLEQVFNEVRELEKHGAQPSESVESDQMIPAGLATAVDKSLLARIGDAFLAVPDGFTTHPRVQPVLEKRREMAYEGKIDWAFAELLALGSLVAEGKLVRFSGQDTRRGTFSQRHSVIIDRHTREEFTPLQLLTTNKDGSPTGGKFLVYDSPLSEYAAVGFEYGYTVGNPDAVVLWEAQFGDFVNGAQSIIDEFISSGEAKWGQLSNVVLLLPHGHEGQGPDHTSGRIERFLQLWAEGSMTIAMPSTPSNYFHLLRRHALDGIQRPLIVFTPKSMLRNKAAVSDIKDFTEIKFRSVLEEPTYEDGVGDRNLVNRILLTSGKIYYEMVARKAKDKREDVAIVRVEQLAPLPRRRLRETLDRYPNAKEFFWVQEEPANQGAWPRFGLELPELLPEKLSGVKRISRRAMSAPSSGSSKVHAVEQQEILDTAFG.

Positions 1-41 are 2-oxoglutarate dehydrogenase E1, N-terminal part; it reads MANISSPFGQNEWLVEEMYRKFRDDPSSVDPSWHEFLVDYN. The disordered stretch occupies residues 40–108; it reads YNPESTQEAT…APAPPPAEGD (69 aa). The linker stretch occupies residues 42 to 94; sequence PESTQEATEPAVVKPAAAPAKPAPAPAPAKPAAGPPAAGNGSPAAAPSAKPAA. 2 stretches are compositionally biased toward low complexity: residues 51 to 61 and 71 to 98; these read PAVVKPAAAPA and KPAAGPPAAGNGSPAAAPSAKPAAAPAK. The succinyltransferase E2 stretch occupies residues 95–343; that stretch reads APAKAPAPPP…LRTIHQMLLA (249 aa). H322 functions as the Proton acceptor; for succinyltransferase activity in the catalytic mechanism. Residues 344–1238 form a 2-oxoglutarate dehydrogenase E1, C-terminal part region; that stretch reads DEFWDEIFRE…QQEILDTAFG (895 aa). R549 lines the thiamine diphosphate pocket. Residues H588 and S613 each contribute to the 2-oxoglutarate site. 6 residues coordinate thiamine diphosphate: S613, L615, D656, A657, A658, and N689. D656 is a binding site for Mg(2+). Mg(2+)-binding residues include N689 and I691. Residues 794 to 824 are a coiled coil; the sequence is DISIKEAEDALRDYQGQLEQVFNEVRELEKH. A 2-oxoglutarate-binding site is contributed by H1031. T1049, R1065, K1100, S1103, Q1153, R1160, and R1161 together coordinate acetyl-CoA.

It belongs to the 2-oxoacid dehydrogenase family. Kgd subfamily. Homodimer. The 2-oxoglutarate dehydrogenase (ODH) complex contains multiple copies of three enzymatic components: 2-oxoglutarate dehydrogenase (E1), dihydrolipoamide succinyltransferase (E2) and lipoamide dehydrogenase (E3). Mg(2+) is required as a cofactor. Thiamine diphosphate serves as cofactor.

It carries out the reaction glyoxylate + 2-oxoglutarate + H(+) = 2-hydroxy-3-oxoadipate + CO2. The enzyme catalyses 2-oxoglutarate + H(+) = succinate semialdehyde + CO2. It catalyses the reaction N(6)-[(R)-lipoyl]-L-lysyl-[protein] + 2-oxoglutarate + H(+) = N(6)-[(R)-S(8)-succinyldihydrolipoyl]-L-lysyl-[protein] + CO2. The catalysed reaction is N(6)-[(R)-dihydrolipoyl]-L-lysyl-[protein] + succinyl-CoA = N(6)-[(R)-S(8)-succinyldihydrolipoyl]-L-lysyl-[protein] + CoA. It functions in the pathway carbohydrate metabolism; tricarboxylic acid cycle; succinate from 2-oxoglutarate (transferase route): step 1/2. It participates in carbohydrate metabolism; tricarboxylic acid cycle; succinyl-CoA from 2-oxoglutarate (dehydrogenase route): step 1/1. With respect to regulation, alpha-ketoglutarate dehydrogenase and decarboxylase activities are inhibited by unphosphorylated GarA, and allosterically activated by acetyl-CoA, the main substrate of the TCA cycle. Shows three enzymatic activities that share a first common step, the attack of thiamine-PP on 2-oxoglutarate (alpha-ketoglutarate, KG), leading to the formation of an enamine-thiamine-PP intermediate upon decarboxylation. Thus, displays KGD activity, catalyzing the decarboxylation from five-carbon 2-oxoglutarate to four-carbon succinate semialdehyde (SSA). Also catalyzes C-C bond formation between the activated aldehyde formed after decarboxylation of alpha-ketoglutarate and the carbonyl of glyoxylate (GLX), to yield 2-hydroxy-3-oxoadipate (HOA), which spontaneously decarboxylates to form 5-hydroxylevulinate (HLA). And is also a component of the 2-oxoglutarate dehydrogenase (ODH) complex, that catalyzes the overall conversion of 2-oxoglutarate to succinyl-CoA and CO(2). The KG decarboxylase and KG dehydrogenase reactions provide two alternative, tightly regulated, pathways connecting the oxidative and reductive branches of the TCA cycle. This Mycobacterium ulcerans (strain Agy99) protein is Multifunctional 2-oxoglutarate metabolism enzyme (kgd).